The primary structure comprises 331 residues: DNA-directed RNA polymerase subunit alpha (331 aa).

Positions Met-1–Glu-233 are alpha N-terminal domain (alpha-NTD). The segment at Ala-268–Asp-331 is alpha C-terminal domain (alpha-CTD).

It belongs to the RNA polymerase alpha chain family. As to quaternary structure, in plastids the minimal PEP RNA polymerase catalytic core is composed of four subunits: alpha, beta, beta', and beta''. When a (nuclear-encoded) sigma factor is associated with the core the holoenzyme is formed, which can initiate transcription.

The protein resides in the plastid. It localises to the chloroplast. The enzyme catalyses RNA(n) + a ribonucleoside 5'-triphosphate = RNA(n+1) + diphosphate. Functionally, DNA-dependent RNA polymerase catalyzes the transcription of DNA into RNA using the four ribonucleoside triphosphates as substrates. This is DNA-directed RNA polymerase subunit alpha from Illicium oligandrum (Star anise).